The sequence spans 493 residues: Acetylcholine receptor subunit beta (493 aa).

Residues 1–24 form the signal peptide; sequence MENVRRMALGLVVMMALALSGVGA. Residues 25–240 are Extracellular-facing; that stretch reads SVMEDTLLSV…VTFYLIIQRK (216 aa). Cysteines 152 and 166 form a disulfide. Asn165 carries an N-linked (GlcNAc...) asparagine glycan. The next 3 membrane-spanning stretches (helical) occupy residues 241 to 265, 273 to 291, and 307 to 328; these read PLFYIVYTIIPCILISILAILVFYL, MSLSISALLAVTVFLLLLA, and YLMFIMILVAFSVILSVVVLNL. At 329-461 the chain is on the cytoplasmic side; the sequence is HHRSPNTHTM…WQYVAMVADR (133 aa). Tyr379 carries the phosphotyrosine; by Tyr-kinases modification. Residues 462-480 form a helical membrane-spanning segment; the sequence is LFLYVFFVICSIGTFSIFL.

It belongs to the ligand-gated ion channel (TC 1.A.9) family. Acetylcholine receptor (TC 1.A.9.1) subfamily. Beta-1/CHRNB1 sub-subfamily. Pentamer of two alpha chains, and one each of the beta, delta, and gamma chains.

The protein resides in the postsynaptic cell membrane. It localises to the cell membrane. It carries out the reaction K(+)(in) = K(+)(out). The catalysed reaction is Na(+)(in) = Na(+)(out). After binding acetylcholine, the AChR responds by an extensive change in conformation that affects all subunits and leads to opening of an ion-conducting channel across the plasma membrane. The chain is Acetylcholine receptor subunit beta (CHRNB1) from Tetronarce californica (Pacific electric ray).